We begin with the raw amino-acid sequence, 547 residues long: Putative nitric oxide synthase (547 aa).

A compositionally biased stretch (low complexity) spans 24–40 (QLAPNPSSFSPTRAAST). 2 disordered regions span residues 24–57 (QLAP…SRGD) and 72–91 (VLAP…RKAL). Over residues 81–91 (RRRRREKRKAL) the composition is skewed to basic residues. A CP-type G domain is found at 167 to 343 (ADQLRDKLSY…LYDTPGVHLH (177 aa)).

This sequence belongs to the TRAFAC class YlqF/YawG GTPase family. NOA1 subfamily.

It catalyses the reaction 2 L-arginine + 3 NADPH + 4 O2 + H(+) = 2 L-citrulline + 2 nitric oxide + 3 NADP(+) + 4 H2O. Functionally, produces nitric oxide (NO) which is a messenger molecule involved in hormonal signaling and defense responses in plant. In Oryza sativa subsp. japonica (Rice), this protein is Putative nitric oxide synthase.